The primary structure comprises 139 residues: MKLIAASLRRLSLAVLTVLLVVSSFAVFTPSASAETYTVKLGSDKGLLVFEPAKLTIKPGDTVEFLNNKVPPHNVVFDAALNPAKSADLAKSLSHKQLLMSPGQSTSTTFPADAPAGEYTFYCEPHRGAGMVGKITVAG.

The N-terminal stretch at 1–34 is a signal peptide; it reads MKLIAASLRRLSLAVLTVLLVVSSFAVFTPSASA. Residues 35-139 enclose the Plastocyanin-like domain; it reads ETYTVKLGSD…GMVGKITVAG (105 aa). Cu cation-binding residues include His-73, Cys-123, His-126, and Met-131.

Belongs to the plastocyanin family. Requires Cu(2+) as cofactor.

The protein resides in the cellular thylakoid membrane. Its function is as follows. Participates in electron transfer between P700 and the cytochrome b6-f complex in photosystem I. The sequence is that of Plastocyanin (petE) from Nostoc sp. (strain PCC 7120 / SAG 25.82 / UTEX 2576).